A 330-amino-acid polypeptide reads, in one-letter code: Ribosomal RNA large subunit methyltransferase F (330 aa).

This sequence belongs to the methyltransferase superfamily. METTL16/RlmF family.

The protein resides in the cytoplasm. The catalysed reaction is adenosine(1618) in 23S rRNA + S-adenosyl-L-methionine = N(6)-methyladenosine(1618) in 23S rRNA + S-adenosyl-L-homocysteine + H(+). Functionally, specifically methylates the adenine in position 1618 of 23S rRNA. The sequence is that of Ribosomal RNA large subunit methyltransferase F from Pseudoalteromonas atlantica (strain T6c / ATCC BAA-1087).